Here is a 374-residue protein sequence, read N- to C-terminus: uncharacterized protein (374 aa).

The interval 1–46 is disordered; that stretch reads MVNEEEKDLTAEGDSNNTGVSPDSIKNKTLDFYPKEKTTERKTRSR. Basic and acidic residues predominate over residues 25–46; that stretch reads IKNKTLDFYPKEKTTERKTRSR. 6 helical membrane-spanning segments follow: residues 70-90, 127-147, 153-173, 199-219, 242-262, and 312-332; these read YAYI…FIAA, WVFY…KIGI, TIVY…IPVI, IWLF…YGLV, ISIA…MLAI, and YFFG…AITI.

This sequence to M.genitalium MG432 and MG443.

The protein resides in the cell membrane. This is an uncharacterized protein from Spiroplasma citri.